Reading from the N-terminus, the 95-residue chain is FMRFamide-like neuropeptides 16 (95 aa).

A signal peptide spans 1-24 (MSLSGFEFSSIIAVLLLLIQLSSA). Residues 25–58 (AVLPVDYASQYGVASADEMTALPEEGSLFAERPA) constitute a propeptide that is removed on maturation. Residues F67, F77, and F87 each carry the phenylalanine amide modification. A propeptide spanning residues 90–95 (SAPFEQ) is cleaved from the precursor.

This sequence belongs to the FARP (FMRFamide related peptide) family.

It is found in the secreted. Functionally, FMRFamides and FMRFamide-like peptides are neuropeptides. AQTFVRF-amide inhibits the activity of dissected pharyngeal myogenic muscle system. The sequence is that of FMRFamide-like neuropeptides 16 (flp-16) from Caenorhabditis briggsae.